The primary structure comprises 298 residues: PYK10-binding protein 1 (298 aa).

N-acetylalanine is present on A2. 2 consecutive Jacalin-type lectin domains span residues A2–P142 and A152–P295. S20 carries the post-translational modification Phosphoserine.

This sequence belongs to the jacalin lectin family. Component of the PYK10 complex, at least composed of PYK10/BGLU23, BGLU21, BGLU22, JAL22, JAL23, PBP1/JAL30, PBP2/JAL31, JAL32, JAL33, JAL34, JAL35, GLL22 and GLL23. As to expression, expressed exclusively in roots.

The protein resides in the cytoplasm. Inhibitor-type lectin that may regulate the correct polymerization of BGLU23/PYK10 upon tissue damage. Activates BGLU21, BGLU22 and BGLU23. The sequence is that of PYK10-binding protein 1 (PBP1) from Arabidopsis thaliana (Mouse-ear cress).